The primary structure comprises 104 residues: uncharacterized protein (104 aa).

A helical transmembrane segment spans residues 81-97 (CLLMLPCISVVMSISSV).

The protein resides in the cell membrane. This is an uncharacterized protein from Bacillus subtilis (strain 168).